The primary structure comprises 149 residues: Calmodulin (149 aa).

Position 2 is an N-acetylalanine (Ala2). EF-hand domains lie at Glu8–Asn43, Pro44–Asp79, Asp81–Lys116, and Leu117–Lys149. Asp21, Asp23, Asp25, Cys27, Glu32, Asp57, Asp59, Asn61, Thr63, Glu68, Asp94, Asp96, Asn98, and Glu105 together coordinate Ca(2+). Residue Lys116 is modified to N6,N6,N6-trimethyllysine. Positions 130, 132, 134, 136, and 141 each coordinate Ca(2+).

The protein belongs to the calmodulin family.

Calmodulin mediates the control of a large number of enzymes, ion channels and other proteins by Ca(2+). Among the enzymes to be stimulated by the calmodulin-Ca(2+) complex are a number of protein kinases and phosphatases. This is Calmodulin (CALM1) from Zea mays (Maize).